The chain runs to 333 residues: Ribosomal RNA small subunit methyltransferase C (333 aa).

It belongs to the methyltransferase superfamily. RsmC family. As to quaternary structure, monomer.

The protein localises to the cytoplasm. It catalyses the reaction guanosine(1207) in 16S rRNA + S-adenosyl-L-methionine = N(2)-methylguanosine(1207) in 16S rRNA + S-adenosyl-L-homocysteine + H(+). In terms of biological role, specifically methylates the guanine in position 1207 of 16S rRNA in the 30S particle. The sequence is that of Ribosomal RNA small subunit methyltransferase C from Mannheimia succiniciproducens (strain KCTC 0769BP / MBEL55E).